The chain runs to 344 residues: Ribosomal RNA large subunit methyltransferase Cfr (344 aa).

The Proton acceptor role is filled by E90. Residues K97 to E330 form the Radical SAM core domain. An intrachain disulfide couples C104 to C335. Residues C111, C115, and C118 each contribute to the [4Fe-4S] cluster site. S-adenosyl-L-methionine is bound by residues G157–E158, S188, S211–H213, and N292. C335 functions as the S-methylcysteine intermediate in the catalytic mechanism.

Belongs to the radical SAM superfamily. RlmN family. Cfr subfamily. Requires [4Fe-4S] cluster as cofactor.

Its subcellular location is the cytoplasm. It catalyses the reaction adenosine(2503) in 23S rRNA + 2 reduced [2Fe-2S]-[ferredoxin] + 2 S-adenosyl-L-methionine = 8-methyladenosine(2503) in 23S rRNA + 5'-deoxyadenosine + L-methionine + 2 oxidized [2Fe-2S]-[ferredoxin] + S-adenosyl-L-homocysteine. Functionally, specifically methylates position 8 of adenine 2503 in 23S rRNA. Confers resistance to some classes of antibiotics. The sequence is that of Ribosomal RNA large subunit methyltransferase Cfr from Clostridium botulinum (strain Okra / Type B1).